The following is a 301-amino-acid chain: Tyrosine recombinase XerC (301 aa).

The Core-binding (CB) domain occupies 1–85 (MELISLFKQY…ALRSFYRFLV (85 aa)). The Tyr recombinase domain maps to 106 to 292 (KLPHFFYEKE…TKEKLQESYR (187 aa)). Catalysis depends on residues Arg-147, Lys-171, His-244, Arg-247, and His-270. The O-(3'-phospho-DNA)-tyrosine intermediate role is filled by Tyr-279.

Belongs to the 'phage' integrase family. XerC subfamily. As to quaternary structure, forms a cyclic heterotetrameric complex composed of two molecules of XerC and two molecules of XerD.

It is found in the cytoplasm. Site-specific tyrosine recombinase, which acts by catalyzing the cutting and rejoining of the recombining DNA molecules. The XerC-XerD complex is essential to convert dimers of the bacterial chromosome into monomers to permit their segregation at cell division. It also contributes to the segregational stability of plasmids. In Pediococcus pentosaceus (strain ATCC 25745 / CCUG 21536 / LMG 10740 / 183-1w), this protein is Tyrosine recombinase XerC.